The following is a 265-amino-acid chain: tRNA (guanine-N(1)-)-methyltransferase (265 aa).

S-adenosyl-L-methionine is bound by residues Gly-110 and 129–134 (LGDFVM). The disordered stretch occupies residues 243–265 (LAAWGAPPPPLPKRRRGAKPNPN). Basic residues predominate over residues 254-265 (PKRRRGAKPNPN).

This sequence belongs to the RNA methyltransferase TrmD family. As to quaternary structure, homodimer.

Its subcellular location is the cytoplasm. It carries out the reaction guanosine(37) in tRNA + S-adenosyl-L-methionine = N(1)-methylguanosine(37) in tRNA + S-adenosyl-L-homocysteine + H(+). Specifically methylates guanosine-37 in various tRNAs. The protein is tRNA (guanine-N(1)-)-methyltransferase of Deinococcus geothermalis (strain DSM 11300 / CIP 105573 / AG-3a).